A 164-amino-acid chain; its full sequence is UPF0304 protein Ent638_2838 (164 aa).

The protein belongs to the UPF0304 family.

The chain is UPF0304 protein Ent638_2838 from Enterobacter sp. (strain 638).